A 150-amino-acid chain; its full sequence is D-aminoacyl-tRNA deacylase (150 aa).

Positions 136-137 match the Gly-cisPro motif, important for rejection of L-amino acids motif; the sequence is GP.

Belongs to the DTD family. As to quaternary structure, homodimer.

Its subcellular location is the cytoplasm. It catalyses the reaction glycyl-tRNA(Ala) + H2O = tRNA(Ala) + glycine + H(+). The catalysed reaction is a D-aminoacyl-tRNA + H2O = a tRNA + a D-alpha-amino acid + H(+). Its function is as follows. An aminoacyl-tRNA editing enzyme that deacylates mischarged D-aminoacyl-tRNAs. Also deacylates mischarged glycyl-tRNA(Ala), protecting cells against glycine mischarging by AlaRS. Acts via tRNA-based rather than protein-based catalysis; rejects L-amino acids rather than detecting D-amino acids in the active site. By recycling D-aminoacyl-tRNA to D-amino acids and free tRNA molecules, this enzyme counteracts the toxicity associated with the formation of D-aminoacyl-tRNA entities in vivo and helps enforce protein L-homochirality. The polypeptide is D-aminoacyl-tRNA deacylase (Staphylococcus epidermidis (strain ATCC 35984 / DSM 28319 / BCRC 17069 / CCUG 31568 / BM 3577 / RP62A)).